A 2273-amino-acid polypeptide reads, in one-letter code: Linear gramicidin synthase subunit A (2273 aa).

Residues 1 to 144 (MRILFLTTFM…AIEELFIREW (144 aa)) are GART. Carrier domains lie at 693 to 767 (APTD…TEQK) and 1724 to 1798 (APRT…TSEQ). Serine 728 and serine 1759 each carry O-(pantetheine 4'-phosphoryl)serine.

This sequence belongs to the ATP-dependent AMP-binding enzyme family. As to quaternary structure, large multienzyme complex composed of 4 subunits; LgrA, LgrB, LgrC and LgrD. Pantetheine 4'-phosphate serves as cofactor.

Activates valine (or leucine, but much less frequently), and then glycine and catalyzes the formation of the peptide bond in the first step of peptide synthesis. This enzyme may also play a role in N-formylation of the first amino acid residue in the synthesized dipeptide. This Brevibacillus parabrevis protein is Linear gramicidin synthase subunit A (lgrA).